A 385-amino-acid chain; its full sequence is UPF0744 protein YSC83 (385 aa).

Belongs to the UPF0744 family.

It localises to the mitochondrion outer membrane. The polypeptide is UPF0744 protein YSC83 (YSC83) (Saccharomyces cerevisiae (strain ATCC 204508 / S288c) (Baker's yeast)).